Here is a 299-residue protein sequence, read N- to C-terminus: Ankyrin repeat domain-containing protein 54 (299 aa).

Residues 1–27 are disordered; it reads MAATGGGADDESRSGRSSSDGECAVAP. An N-acetylalanine modification is found at A2. S62 carries the post-translational modification Phosphoserine. Positions 98–116 match the Nuclear localization signal (NLS) motif; that stretch reads RRLGPTGKEVHALKRLRDS. ANK repeat units follow at residues 108–137, 141–170, 174–203, and 207–239; these read HALK…DPCA, KGRT…DPNQ, LGNT…RVDA, and AGRT…EVKQ. Residues 140 to 240 form an LYN-binding region; the sequence is DKGRTALHFA…EAVRLEVKQI (101 aa). Positions 282–292 match the Nuclear export signal (NES) motif; it reads LLASFTSLSLQ.

As to quaternary structure, interacts (via ankyrin repeat region) with LYN (via SH3-domain) in an activation-independent status of LYN. Forms a multiprotein complex with LYN and HCLS1. Interacts with TSN2, VAV1, DBNL and LASP1. Expressed in a variety of hemopoietic cell lines and tissue with high levels in testis. Highly expressed in ciliated cells.

The protein resides in the nucleus. It is found in the cytoplasm. The protein localises to the midbody. Functionally, plays an important role in regulating intracellular signaling events associated with erythroid terminal differentiation. This is Ankyrin repeat domain-containing protein 54 (Ankrd54) from Mus musculus (Mouse).